Here is a 114-residue protein sequence, read N- to C-terminus: Probable acid stress chaperone HdeA (114 aa).

The signal sequence occupies residues 1–26; that stretch reads MIKALFNKNTALAAVAILALSGGAMA. An intrachain disulfide couples Cys46 to Cys94.

The protein belongs to the HdeA family.

The protein localises to the periplasm. In terms of biological role, required for optimal acid stress protection. Exhibits a chaperone-like activity only at low pH by suppressing non-specifically the aggregation of denaturated periplasmic proteins. Contributes to acid resistance. Not required for wild-type virulence in the BALB/c mouse model. The sequence is that of Probable acid stress chaperone HdeA from Brucella abortus (strain 2308).